The chain runs to 848 residues: Heat shock protein 70 homolog lhs1 (848 aa).

Residues 1 to 21 form the signal peptide; that stretch reads MKRSVLTIILFFSCQFWHAFA. N-linked (GlcNAc...) asparagine glycosylation is found at Asn134, Asn247, Asn359, Asn457, Asn462, Asn488, Asn555, Asn632, Asn678, Asn733, and Asn817. The disordered stretch occupies residues 784–848; the sequence is KLKAKKGASS…QQEIDDSDEL (65 aa). 2 stretches are compositionally biased toward polar residues: residues 807–822 and 829–840; these read TNDI…TSTQ and ASVTQRPSSLQQ. Residues 845 to 848 carry the Prevents secretion from ER motif; sequence SDEL.

Belongs to the heat shock protein 70 family.

Its subcellular location is the endoplasmic reticulum lumen. The catalysed reaction is ATP + H2O = ADP + phosphate + H(+). Chaperone required for protein translocation and folding in the endoplasmic reticulum. The chain is Heat shock protein 70 homolog lhs1 from Schizosaccharomyces pombe (strain 972 / ATCC 24843) (Fission yeast).